The chain runs to 329 residues: Caveolae-associated protein 4a (329 aa).

Disordered stretches follow at residues 198 to 260 (SKEN…NIAK) and 274 to 329 (KERT…IHED). The stretch at 198 to 262 (SKENMNKTRE…RLKENIAKKA (65 aa)) forms a coiled coil. The span at 201–220 (NMNKTREKTRENLSKTKESL) shows a compositional bias: basic and acidic residues. The segment covering 221 to 232 (SKTGQTLGTKFN) has biased composition (polar residues). Basic and acidic residues predominate over residues 242 to 260 (EQREKIKQSSERLKENIAK). Over residues 279-290 (AEGQEGAEAEPA) the composition is skewed to low complexity. A Phosphothreonine modification is found at Thr292. A compositionally biased stretch (basic and acidic residues) spans 310–329 (TENKREGPVSEEGATRIHED).

The protein belongs to the CAVIN family.

It localises to the cytoplasm. The protein resides in the myofibril. Its subcellular location is the sarcomere. The protein localises to the membrane. It is found in the caveola. Induces rhoa activation and activates nppa transcription and myofibrillar organization through the rho/rock signaling pathway. The sequence is that of Caveolae-associated protein 4a (cavin4a) from Danio rerio (Zebrafish).